Here is a 926-residue protein sequence, read N- to C-terminus: BTB/POZ domain-containing protein KCTD19 (926 aa).

The BTB 1 domain maps to 18-72 (NVGGWHFSVPRSKLSQFPDSLLWKEASALTSSESQRLFIDRDGSTFRHVHYYLYT). S270 carries the post-translational modification Phosphoserine. A BTB 2 domain is found at 398-485 (IKVYVGSHWY…YHIPSLSEAL (88 aa)). Residues 673-751 (GSEAASQPST…PAPEQPLPEA (79 aa)) are disordered. A compositionally biased stretch (basic and acidic residues) spans 730-742 (DWSKQRTKERESP).

In terms of assembly, identified in a complex with ZNF541, HDAC1 and HSPA2. Identified in a complex with ZNF541 and HDAC1. Identified in a complex with HDAC1, HDAC2, DNTTIP1 and ZNF541.

It is found in the nucleus. Its function is as follows. Transcription regulator which is essential for male fertility and for the completion of meiotic prophase in spermatocytes. Regulates progression of the pachytene stage of meiotic prophase and promotes the transcriptional activation activity ZNF541. Required for the organization of chromosomes during metaphase I. This Homo sapiens (Human) protein is BTB/POZ domain-containing protein KCTD19 (KCTD19).